A 212-amino-acid chain; its full sequence is Claudin-7-A (212 aa).

Over 1 to 7 the chain is Cytoplasmic; sequence MANSGVQ. Residues 8-28 traverse the membrane as a helical segment; it reads LLGFGLSLIGIIGLIVGTILP. At 29–81 the chain is on the extracellular side; it reads QWKMSAYVGDSIITAVATYQGLWMSCAFQSTGQLQCKIYDSILQLDSDLQATR. A helical membrane pass occupies residues 82 to 102; the sequence is ALMIVGIIVSIAGLGVASIGM. Residues 103 to 119 lie on the Cytoplasmic side of the membrane; the sequence is KCTTCGADDKVRKTRTA. Residues 120 to 140 traverse the membrane as a helical segment; the sequence is MTGGIILLVGALCAVVACSWF. The Extracellular portion of the chain corresponds to 141 to 162; it reads AHNVIRAFYNPFTPVNTKFEFG. A helical membrane pass occupies residues 163–183; the sequence is AAIFIAWGGSFLDVLGGAMLA. At 184–212 the chain is on the cytoplasmic side; it reads ASCPRSKQVSKYPKSNSTRSANGSNKEYV. The disordered stretch occupies residues 191-212; the sequence is QVSKYPKSNSTRSANGSNKEYV.

Belongs to the claudin family.

It is found in the cell junction. Its subcellular location is the tight junction. It localises to the cell membrane. Its function is as follows. Plays a major role in tight junction-specific obliteration of the intercellular space. The polypeptide is Claudin-7-A (Danio rerio (Zebrafish)).